We begin with the raw amino-acid sequence, 646 residues long: Lamin-1 (646 aa).

Residues 1–85 (MAEKAGEAGV…GSRATSPTSF (85 aa)) are head. The segment at 1–94 (MAEKAGEAGV…FSRAQEKEEL (94 aa)) is disordered. Polar residues-rich tracts occupy residues 48 to 67 (ATPSSQQSQKSVRTESSMSL) and 75 to 87 (QGSRATSPTSFSR). The interval 86–126 (SRAQEKEELQNLNDRLAKILNKLNDSEEENRTLKIRLTTVQ) is coil 1A. The IF rod domain maps to 90–446 (EKEELQNLND…KLLSDEEIRL (357 aa)). The segment at 127–137 (QETSADLNDQI) is linker 1. Residues 138–281 (GKYRDELERA…SKLQRQSLSV (144 aa)) form a coil 1B region. Polar residues predominate over residues 281-301 (VTTVDHHSAQSTSRRSGSDFS). Positions 281–304 (VTTVDHHSAQSTSRRSGSDFSASV) are disordered. Residues 282-299 (TTVDHHSAQSTSRRSGSD) form a linker 2 region. The segment at 300–439 (FSASVEDMRS…TELEMYNKLL (140 aa)) is coil 2. The tail stretch occupies residues 440-646 (SDEEIRLGIT…GKGILGFFGL (207 aa)). Residues 457 to 471 (VRHGAKKRKLTETFY) carry the Nuclear localization signal motif. Residues 476 to 487 (GSRSSAGSRSAG) are compositionally biased toward low complexity. The segment at 476–513 (GSRSSAGSRSAGHNSTPVTKSQVTRTTVKTSENKSKAS) is disordered. Residues 488 to 505 (HNSTPVTKSQVTRTTVKT) show a composition bias toward polar residues. In terms of domain architecture, LTD spans 504–618 (KTSENKSKAS…NQMATYEVSA (115 aa)).

Belongs to the intermediate filament family.

Its subcellular location is the nucleus. In terms of biological role, intermediate filament (IF) protein, component of the nuclear lamina, a fibrous layer on the nucleoplasmic side of the inner nuclear membrane, which is thought to provide a framework for the nuclear envelope. This Hypsibius exemplaris (Freshwater tardigrade) protein is Lamin-1.